A 949-amino-acid chain; its full sequence is Translation initiation factor IF-2 (949 aa).

2 disordered regions span residues Phe50–Arg206 and Gln220–Lys359. 2 stretches are compositionally biased toward basic and acidic residues: residues Glu52 to Lys84 and Phe104 to Ser143. Composition is skewed to polar residues over residues Lys144–Gln154 and Gly164–Pro180. Over residues Asn187–Arg206 the composition is skewed to low complexity. Basic and acidic residues predominate over residues Tyr224–Pro275. Low complexity predominate over residues Lys319–Asn336. Residues Glu450–Lys619 form the tr-type G domain. A G1 region spans residues Gly459–Thr466. Gly459–Thr466 contributes to the GTP binding site. The segment at Gly484 to His488 is G2. A G3 region spans residues Asp505–Gly508. Residues Asp505 to His509 and Asn559 to Asp562 contribute to the GTP site. Residues Asn559–Asp562 form a G4 region. The G5 stretch occupies residues Ser595–Lys597.

The protein belongs to the TRAFAC class translation factor GTPase superfamily. Classic translation factor GTPase family. IF-2 subfamily.

Its subcellular location is the cytoplasm. One of the essential components for the initiation of protein synthesis. Protects formylmethionyl-tRNA from spontaneous hydrolysis and promotes its binding to the 30S ribosomal subunits. Also involved in the hydrolysis of GTP during the formation of the 70S ribosomal complex. The chain is Translation initiation factor IF-2 from Streptococcus uberis (strain ATCC BAA-854 / 0140J).